The chain runs to 355 residues: D-alanine--D-alanine ligase (355 aa).

One can recognise an ATP-grasp domain in the interval 143–350; it reads KTIFSNLKIP…IEQLVAKLVD (208 aa). 178–233 serves as a coordination point for ATP; that stretch reads LKKLNFPFFVKPSNSGSSLGISKVINESEILQSLEKAQKIDSRILVEEGLEVREIE. Positions 303, 317, and 319 each coordinate Mg(2+).

It belongs to the D-alanine--D-alanine ligase family. Mg(2+) serves as cofactor. Requires Mn(2+) as cofactor.

It is found in the cytoplasm. The enzyme catalyses 2 D-alanine + ATP = D-alanyl-D-alanine + ADP + phosphate + H(+). It participates in cell wall biogenesis; peptidoglycan biosynthesis. Functionally, cell wall formation. This Prochlorococcus marinus (strain MIT 9215) protein is D-alanine--D-alanine ligase.